Here is a 1553-residue protein sequence, read N- to C-terminus: Pre-mRNA cleavage complex 2 protein Pcf11 (1553 aa).

Position 2 is an N-acetylserine (serine 2). Residues 14–142 enclose the CID domain; sequence AREDACRDYQ…ALDVRVNSLD (129 aa). The residue at position 120 (serine 120) is a Phosphoserine. Threonine 121 carries the phosphothreonine modification. The segment at 167–186 is disordered; sequence NKSPDEPSTPGTVVSSPSIS. Residues serine 169 and serine 182 each carry the phosphoserine modification. The span at 174-186 shows a compositional bias: low complexity; sequence STPGTVVSSPSIS. Residues 208 to 235 are a coiled coil; it reads LLAKQKQLLELQQKKLELELEQAKAQLA. The tract at residues 265-648 is disordered; that stretch reads AVKTPHQVPV…KQQHRLSVDA (384 aa). Lysine 291 participates in a covalent cross-link: Glycyl lysine isopeptide (Lys-Gly) (interchain with G-Cter in SUMO2). Positions 308-318 are enriched in basic and acidic residues; the sequence is HGKEQSHRKEF. A compositionally biased stretch (polar residues) spans 321-342; that stretch reads NTINQSDIKTSKNVPSEKLNSS. Lysine 329 is covalently cross-linked (Glycyl lysine isopeptide (Lys-Gly) (interchain with G-Cter in SUMO2)). 3 stretches are compositionally biased toward basic and acidic residues: residues 343–365, 381–422, and 428–443; these read KQEKSKSGERITKKELDQLDSKS, HTKD…DVKE, and EKKEKDEHMKSSEHRV. Lysine 457 is covalently cross-linked (Glycyl lysine isopeptide (Lys-Gly) (interchain with G-Cter in SUMO2)). Residues 476-487 show a composition bias toward basic residues; sequence STRKRSRSRSPK. Phosphoserine occurs at positions 490, 495, 510, and 512. Positions 495–509 are enriched in basic residues; it reads SPKRRDRRSPKRRQR. Composition is skewed to basic and acidic residues over residues 530–568 and 600–616; these read SHMEEFPPPSREERNIKRSAKQDVRDPRRLKKMDEDRPQ and SGWEENKSLQQGDEHSK. Serine 645 bears the Phosphoserine mark. A Glycyl lysine isopeptide (Lys-Gly) (interchain with G-Cter in SUMO2) cross-link involves residue lysine 654. The residue at position 705 (serine 705) is a Phosphoserine. The interval 707–733 is disordered; it reads FNDRFPLKRPRYEDSDKPFVDGPASRF. Over residues 716–725 the composition is skewed to basic and acidic residues; it reads PRYEDSDKPF. Lysine 723 is covalently cross-linked (Glycyl lysine isopeptide (Lys-Gly) (interchain with G-Cter in SUMO2)). At serine 777 the chain carries Phosphoserine. Threonine 785 is subject to Phosphothreonine. Residue serine 794 is modified to Phosphoserine. Arginine 805, arginine 820, and arginine 833 each carry asymmetric dimethylarginine. Serine 851 carries the phosphoserine modification. The tract at residues 921–940 is disordered; sequence HGPSGAAIRFDGPHGQPGGG. Asymmetric dimethylarginine is present on residues arginine 929, arginine 944, arginine 957, arginine 982, arginine 995, arginine 1008, arginine 1092, and arginine 1103. Lysine 1276 is covalently cross-linked (Glycyl lysine isopeptide (Lys-Gly) (interchain with G-Cter in SUMO2)). The interval 1286–1313 is disordered; sequence DSATAQVTEAVAQPPPEEDEDQNEDQDV. The span at 1301–1313 shows a compositional bias: acidic residues; it reads PEEDEDQNEDQDV. Glycyl lysine isopeptide (Lys-Gly) (interchain with G-Cter in SUMO2) cross-links involve residues lysine 1417, lysine 1509, lysine 1522, and lysine 1544. A disordered region spans residues 1516–1553; sequence CESPKVKEEQIDAPPACSEESVATPTEIKTESDTVESV.

In terms of assembly, associates with the phosphorylated CTD domain of POLR2A /RNA polymerase II. Post-translationally, phosphorylation at Ser-120 and/or Thr-121 by WNK1 weakens its association with POLR2A/RNA polymerase II, promoting transcript release from the chromatin template and mRNA export to the cytoplasm.

The protein resides in the nucleus. In terms of biological role, component of pre-mRNA cleavage complex II, which promotes transcription termination by RNA polymerase II. This chain is Pre-mRNA cleavage complex 2 protein Pcf11, found in Mus musculus (Mouse).